The sequence spans 101 residues: MERLDKAALNALQPSDFRNESSLASTLKTLLFFTALMITVPIGLYFTTKSYVFEGAFGMSNRDSYFYAAIVAVVAVHVVLALFVYVAWNEGSRQWREGKQD.

Residues 1-25 (MERLDKAALNALQPSDFRNESSLAS) are Cytoplasmic-facing. The chain crosses the membrane as a helical span at residues 26 to 46 (TLKTLLFFTALMITVPIGLYF). Over 47–65 (TTKSYVFEGAFGMSNRDSY) the chain is Lumenal. The chain crosses the membrane as a helical span at residues 66 to 86 (FYAAIVAVVAVHVVLALFVYV). Residues 87–101 (AWNEGSRQWREGKQD) are Cytoplasmic-facing.

Belongs to the VMA21 family. In terms of assembly, associates with the V0 complex of the vacuolar ATPase (V-ATPase). Interacts with ATP6AP2.

It is found in the endoplasmic reticulum membrane. Its subcellular location is the endoplasmic reticulum-Golgi intermediate compartment membrane. The protein resides in the cytoplasmic vesicle. The protein localises to the COPII-coated vesicle membrane. Functionally, required for the assembly of the V0 complex of the vacuolar ATPase (V-ATPase) in the endoplasmic reticulum. The protein is Vacuolar ATPase assembly integral membrane protein VMA21 of Bos taurus (Bovine).